The following is an 827-amino-acid chain: Zinc finger protein 438 (827 aa).

Disordered stretches follow at residues 1 to 31 (MQNS…LQNK), 117 to 173 (LKLP…LYKP), and 193 to 232 (ALTN…AKQD). 2 stretches are compositionally biased toward polar residues: residues 16–31 (NIPS…LQNK) and 150–159 (PAQTQMCPQM). A compositionally biased stretch (pro residues) spans 217–226 (PATPASPTPE). 3 C2H2-type zinc fingers span residues 506–528 (HRCH…MNTH), 534–556 (YSCR…MKLH), and 566–589 (MCCE…KEVH). The tract at residues 682–723 (FPGSKGTQEELVQHASHDWKRHPERGKPEKVHSSSEESHACP) is disordered. Basic and acidic residues-rich tracts occupy residues 688 to 699 (TQEELVQHASHD) and 706 to 721 (RGKP…ESHA). The C2H2-type 4 zinc-finger motif lies at 775–798 (FNCLLCAEMLGQKEDLLHHWKHQH).

It localises to the nucleus. Acts as a transcriptional repressor. This Pongo abelii (Sumatran orangutan) protein is Zinc finger protein 438 (ZNF438).